Here is a 350-residue protein sequence, read N- to C-terminus: MAAAAGRSLLLLLCSRGGGGGAGGCGALTAGCFPGLGVSRHRPHQQHRTAHQRPASWQSVGAAYCSTVVPSDDVTVVYQNGLPVISVRLPSRRERCQFTLKPISDSVGVFLRQLQEEDRGIDRVAIYSPDGVRVAASTGIDLLLLDDFKLVINDLTYHVRPPKRDLLSHEDAATLNDVKTLVQQLYTTLCIEQHQLNKERELVERLEDLKQQLAPLEKVRIEISRKAEKRTTLVLWGGLAYMATQFGILARLTWWEYSWDIMEPVTYFITYGSAMAMYAYFVMTRQEYVYPEARDRQYLLFFHKGAKKSRFDLEKYNQLKDAIAQAEMDLKRLRDPLQVHLPLRQIGEKE.

A mitochondrion-targeting transit peptide spans 1–49 (MAAAAGRSLLLLLCSRGGGGGAGGCGALTAGCFPGLGVSRHRPHQQHRT). At 50 to 232 (AHQRPASWQS…ISRKAEKRTT (183 aa)) the chain is on the mitochondrial matrix side. Phosphoserine; by CaMK2 is present on residues serine 56 and serine 91. Residues 74 to 164 (VTVVYQNGLP…LTYHVRPPKR (91 aa)) form an N-terminal MCU domain region. The residue at position 96 (cysteine 96) is an S-glutathionyl cysteine. Residues 191-220 (IEQHQLNKERELVERLEDLKQQLAPLEKVR) adopt a coiled-coil conformation. Residues 233–256 (LVLWGGLAYMATQFGILARLTWWE) form a helical membrane-spanning segment. At 257–264 (YSWDIMEP) the chain is on the mitochondrial intermembrane side. A Selectivity filter motif is present at residues 259-267 (WDIMEPVTY). Glutamate 263 is a binding site for Ca(2+). Residues 265-282 (VTYFITYGSAMAMYAYFV) form a helical membrane-spanning segment. The Mitochondrial matrix segment spans residues 283–350 (MTRQEYVYPE…LPLRQIGEKE (68 aa)). A juxtamembrane helix region spans residues 284–289 (TRQEYV). A coiled-coil region spans residues 310 to 338 (RFDLEKYNQLKDAIAQAEMDLKRLRDPLQ). At lysine 331 the chain carries N6-acetyllysine.

It belongs to the MCU (TC 1.A.77) family. As to quaternary structure, homotetramer. Component of the uniplex complex, composed of MCU, EMRE/SMDT1, MICU1 and MICU2 (or MICU3) in a 4:4:1:1 stoichiometry. Interacts with CCDC109B/MCUB; this inhibits channel activity. Interacts with MCUR1. Interactions with MICU1 and MCUR1 are mutually exclusive. Interacts with SLC25A23. In terms of processing, phosphorylation by CaMK2 in heart leads to increased MCU current. The regulation of MCU by CaMK2 is however subject to discussion: another group was unable to reproduce these results. Phosphorylated on tyrosines by PTK2B/PYK2, promoting oligomerization. Glutathionylation at Cys-96 in response to reactive oxygen species (ROS) promotes MCU higher-order assembly, leading to constitutive activation of the MCU channel and mitochondrial calcium overload. Post-translationally, undergoes proteolytic degradation by SPG7. In terms of tissue distribution, detected in heart muscle (at protein level). Expressed in skeletal muscle, heart, kidney, liver, brain, lung, white fat and spleen.

Its subcellular location is the mitochondrion inner membrane. It carries out the reaction Ca(2+)(in) = Ca(2+)(out). Its activity is regulated as follows. MCU channel activity is regulated by the heterodimer composed of MICU1 and either MICU2 or MICU3, which act as calcium-sensors. At low calcium levels, MICU1 occludes the pore of the MCU channel, preventing mitochondrial calcium uptake. At higher calcium levels, calcium-binding to MICU1 and MICU2 (or MICU3) induces a conformational change that weakens MCU-MICU1 interactions and moves the MICU1-MICU2 heterodimer away from the pore, allowing calcium permeation through the channel. MCU channel activity is gated by EMRE/SMDT1 via the juxtamembrane helix loop. Inhibited by ruthenium red or its derivative Ru360. Channel-forming and calcium-conducting subunit of the mitochondrial inner membrane calcium uniporter complex (uniplex), which mediates calcium uptake into the mitochondrial matrix. MCU channel activity is regulated by the calcium-sensor subunits of the uniplex MICU1 and MICU2 (or MICU3). Mitochondrial calcium homeostasis plays key roles in cellular physiology and regulates ATP production, cytoplasmic calcium signals and activation of cell death pathways. Involved in buffering the amplitude of systolic calcium rises in cardiomyocytes. While dispensable for baseline homeostatic cardiac function, acts as a key regulator of short-term mitochondrial calcium loading underlying a 'fight-or-flight' response during acute stress: acts by mediating a rapid increase of mitochondrial calcium in pacemaker cells. Participates in mitochondrial permeability transition during ischemia-reperfusion injury. Mitochondrial calcium uptake in skeletal muscle cells is involved in muscle size in adults. Regulates synaptic vesicle endocytosis kinetics in central nerve terminal. Regulates glucose-dependent insulin secretion in pancreatic beta-cells by regulating mitochondrial calcium uptake. Involved in antigen processing and presentation. This is Calcium uniporter protein, mitochondrial from Mus musculus (Mouse).